Consider the following 128-residue polypeptide: Probable 4-amino-4-deoxy-L-arabinose-phosphoundecaprenol flippase subunit ArnF (128 aa).

Residues 1–2 (MG) are Cytoplasmic-facing. Residues 3–23 (LMWGLFSVIIASAAQLSLGFA) traverse the membrane as a helical segment. At 24–32 (ASHLPPMTH) the chain is on the periplasmic side. Residues 33–53 (LWDFIAALLAFGLDARILLLG) traverse the membrane as a helical segment. Residues 54 to 76 (LQGYLLSVFCWYKTLHKLALSKA) lie on the Cytoplasmic side of the membrane. Residues 77-97 (YALLSMSYVLVWIASMVLPGW) form a helical membrane-spanning segment. The Periplasmic segment spans residues 98–100 (EGT). A helical membrane pass occupies residues 101–121 (FSLKALLGVACIMSGLMLIFL). The Cytoplasmic portion of the chain corresponds to 122-128 (PTTKQRY).

Belongs to the ArnF family. As to quaternary structure, heterodimer of ArnE and ArnF.

The protein localises to the cell inner membrane. The protein operates within bacterial outer membrane biogenesis; lipopolysaccharide biosynthesis. Translocates 4-amino-4-deoxy-L-arabinose-phosphoundecaprenol (alpha-L-Ara4N-phosphoundecaprenol) from the cytoplasmic to the periplasmic side of the inner membrane. In Escherichia coli O7:K1 (strain IAI39 / ExPEC), this protein is Probable 4-amino-4-deoxy-L-arabinose-phosphoundecaprenol flippase subunit ArnF.